The following is a 206-amino-acid chain: Adenylate kinase (206 aa).

10–15 (GAGKGT) is a binding site for ATP. Positions 30 to 59 (STGDMLRAAVAAGTPVGLKAKDIMASGGLV) are NMP. AMP contacts are provided by residues Thr31, Arg36, 57–59 (GLV), 85–88 (GFPR), and Gln92. An LID region spans residues 126–142 (NRVAETTARGEQVRADD). An ATP-binding site is contributed by Arg127. Residues Arg139 and Arg150 each coordinate AMP. Met178 is a binding site for ATP.

Belongs to the adenylate kinase family. As to quaternary structure, monomer.

The protein localises to the cytoplasm. It carries out the reaction AMP + ATP = 2 ADP. It functions in the pathway purine metabolism; AMP biosynthesis via salvage pathway; AMP from ADP: step 1/1. Catalyzes the reversible transfer of the terminal phosphate group between ATP and AMP. Plays an important role in cellular energy homeostasis and in adenine nucleotide metabolism. This Nitrobacter winogradskyi (strain ATCC 25391 / DSM 10237 / CIP 104748 / NCIMB 11846 / Nb-255) protein is Adenylate kinase.